Here is a 250-residue protein sequence, read N- to C-terminus: UPF0259 membrane protein PC1_1998 (250 aa).

The next 6 membrane-spanning stretches (helical) occupy residues 20 to 40 (FISILMMSLLTAFITVILNHA), 90 to 110 (FAALVGNVLLTGGVLMLIQLV), 132 to 152 (LLFLILLCTLLIQLGMMLLVI), 156 to 176 (LLAIALSLSPVIVVTEKSGIF), 192 to 212 (ATAPAIVMWLLAKIAILLVVS), and 222 to 242 (LGVVLNGLSNLISAILLIYLF).

The protein belongs to the UPF0259 family.

The protein localises to the cell inner membrane. The chain is UPF0259 membrane protein PC1_1998 from Pectobacterium carotovorum subsp. carotovorum (strain PC1).